We begin with the raw amino-acid sequence, 382 residues long: Sphingosine kinase 1 (382 aa).

The DAGKc domain occupies 12–159 (PRPCRVLVLL…MNLLSLHTAS (148 aa)). Residues 22–24 (NPQ) and 54–58 (TERKN) each bind ATP. Position 79–82 (79–82 (SGDG)) interacts with substrate. Catalysis depends on Asp-81, which acts as the Proton donor/acceptor. ATP contacts are provided by residues Glu-86 and 111-113 (GSG). 2 consecutive short sequence motifs (nuclear export signal) follow at residues 147–155 (LSPMNLLSL) and 161–169 (LRLYSVLSL). Substrate is bound at residue Asp-178. Arg-185 and Arg-191 together coordinate ATP. Residue Thr-193 is modified to Phosphothreonine. At Ser-225 the chain carries Phosphoserine. 340–342 (DGE) provides a ligand contact to ATP.

In terms of assembly, interacts with ACY1. Binds to calmodulin. Interacts with SPHKAP. Interacts with CIB1, the interaction occurs in a calcium-dependent manner. Interacts with TRAF2. Interacts with EEF1A1; the interaction enhances SPHK1 kinase activity. Requires Mg(2+) as cofactor. As to expression, widely expressed. Expressed in brain (at protein level). Detected in neurons.

The protein resides in the cytoplasm. It localises to the endosome membrane. The protein localises to the nucleus. It is found in the cell membrane. Its subcellular location is the synapse. It catalyses the reaction a sphingoid base + ATP = a sphingoid 1-phosphate + ADP + H(+). It carries out the reaction L-seryl-[protein] + acetyl-CoA = O-acetyl-L-seryl-[protein] + CoA. The enzyme catalyses sphinganine + ATP = sphinganine 1-phosphate + ADP + H(+). The catalysed reaction is sphing-4-enine + ATP = sphing-4-enine 1-phosphate + ADP + H(+). It catalyses the reaction 1-O-hexadecyl-2-amino-sn-glycerol + ATP = 1-O-hexadecyl-2-desoxy-2-amino-sn-glycero-3-phosphate + ADP + H(+). With respect to regulation, acetyltransferase activity increases in presence of the kinase substrate, sphingosine. In Purkinje cells, kinase activity on sphingosine increases in presence of VEGFA. In neurons, kinase activity increases during the first 24h in presence of Amyloid-beta protein 42 to decrease after 96h. Catalyzes the phosphorylation of sphingosine to form sphingosine 1-phosphate (SPP), a lipid mediator with both intra- and extracellular functions. Also acts on D-erythro-sphingosine and to a lesser extent sphinganine, but not other lipids, such as D,L-threo-dihydrosphingosine, N,N-dimethylsphingosine, diacylglycerol, ceramide, or phosphatidylinositol. In contrast to proapoptotic SPHK2, has a negative effect on intracellular ceramide levels, enhances cell growth and inhibits apoptosis. Involved in the regulation of inflammatory response and neuroinflammation. Via the product sphingosine 1-phosphate, stimulates TRAF2 E3 ubiquitin ligase activity, and promotes activation of NF-kappa-B in response to TNF signaling. In response to TNF and in parallel to NF-kappa-B activation, negatively regulates RANTES induction through p38 MAPK signaling pathway. Involved in endocytic membrane trafficking induced by sphingosine, recruited to dilate endosomes, also plays a role on later stages of endosomal maturation and membrane fusion independently of its kinase activity. In Purkinje cells, seems to be also involved in the regulation of autophagosome-lysosome fusion upon VEGFA. Its function is as follows. Has serine acetyltransferase activity on PTGS2/COX2 in an acetyl-CoA dependent manner. The acetyltransferase activity increases in presence of the kinase substrate, sphingosine. During neuroinflammation, through PTGS2 acetylation, promotes neuronal secretion of specialized preresolving mediators (SPMs), especially 15-R-lipoxin A4, which results in an increase of phagocytic microglia. In Mus musculus (Mouse), this protein is Sphingosine kinase 1.